A 270-amino-acid polypeptide reads, in one-letter code: UPF0354 protein BA_4944/GBAA_4944/BAS4588 (270 aa).

This sequence belongs to the UPF0354 family.

The polypeptide is UPF0354 protein BA_4944/GBAA_4944/BAS4588 (Bacillus anthracis).